The chain runs to 128 residues: Phosphoribosyl-AMP cyclohydrolase (128 aa).

Asp77 is a binding site for Mg(2+). A Zn(2+)-binding site is contributed by Cys78. The Mg(2+) site is built by Asp79 and Asp81. Residues Cys95 and Cys102 each coordinate Zn(2+).

The protein belongs to the PRA-CH family. In terms of assembly, homodimer. Mg(2+) is required as a cofactor. Requires Zn(2+) as cofactor.

It localises to the cytoplasm. It catalyses the reaction 1-(5-phospho-beta-D-ribosyl)-5'-AMP + H2O = 1-(5-phospho-beta-D-ribosyl)-5-[(5-phospho-beta-D-ribosylamino)methylideneamino]imidazole-4-carboxamide. The protein operates within amino-acid biosynthesis; L-histidine biosynthesis; L-histidine from 5-phospho-alpha-D-ribose 1-diphosphate: step 3/9. Catalyzes the hydrolysis of the adenine ring of phosphoribosyl-AMP. This chain is Phosphoribosyl-AMP cyclohydrolase, found in Methylococcus capsulatus (strain ATCC 33009 / NCIMB 11132 / Bath).